We begin with the raw amino-acid sequence, 590 residues long: Multidrug resistance-like ATP-binding protein MdlA (590 aa).

The 286-residue stretch at 18-303 (YLGAVALLVI…LAWMFNIVER (286 aa)) folds into the ABC transmembrane type-1 domain. 6 helical membrane passes run 23-43 (ALLV…GIVV), 53-73 (TGQI…VYLL), 134-154 (GVLT…MMST), 155-175 (QISW…AIMI), 248-268 (IYIA…WMVV), and 280-300 (FMMY…MFNI). One can recognise an ABC transporter domain in the interval 337 to 570 (VNIHQFTYPQ…SGWYRDMYRY (234 aa)). Residue 369 to 376 (GPTGSGKS) participates in ATP binding.

It belongs to the ABC transporter superfamily. Drug exporter-2 (TC 3.A.1.117) family.

It localises to the cell inner membrane. It catalyses the reaction ATP + H2O + xenobioticSide 1 = ADP + phosphate + xenobioticSide 2.. The sequence is that of Multidrug resistance-like ATP-binding protein MdlA (mdlA) from Escherichia coli (strain K12).